The primary structure comprises 232 residues: ATP-dependent Clp protease proteolytic subunit 2 (232 aa).

The active-site Nucleophile is serine 124. Histidine 149 is a catalytic residue.

This sequence belongs to the peptidase S14 family. In terms of assembly, fourteen ClpP subunits assemble into 2 heptameric rings which stack back to back to give a disk-like structure with a central cavity, resembling the structure of eukaryotic proteasomes.

It localises to the cytoplasm. It carries out the reaction Hydrolysis of proteins to small peptides in the presence of ATP and magnesium. alpha-casein is the usual test substrate. In the absence of ATP, only oligopeptides shorter than five residues are hydrolyzed (such as succinyl-Leu-Tyr-|-NHMec, and Leu-Tyr-Leu-|-Tyr-Trp, in which cleavage of the -Tyr-|-Leu- and -Tyr-|-Trp bonds also occurs).. Its function is as follows. Cleaves peptides in various proteins in a process that requires ATP hydrolysis. Has a chymotrypsin-like activity. Plays a major role in the degradation of misfolded proteins. This is ATP-dependent Clp protease proteolytic subunit 2 from Nostoc sp. (strain PCC 7120 / SAG 25.82 / UTEX 2576).